Reading from the N-terminus, the 503-residue chain is Arginyl-tRNA--protein transferase 1 (503 aa).

The protein belongs to the R-transferase family.

The protein resides in the cytoplasm. It carries out the reaction an N-terminal L-alpha-aminoacyl-[protein] + L-arginyl-tRNA(Arg) = an N-terminal L-arginyl-L-aminoacyl-[protein] + tRNA(Arg) + H(+). Its function is as follows. Involved in the post-translational conjugation of arginine to the N-terminal aspartate or glutamate of a protein. This arginylation is required for degradation of the protein via the ubiquitin pathway. Does not arginylate cysteine residues. This chain is Arginyl-tRNA--protein transferase 1 (ATE1), found in Saccharomyces cerevisiae (strain ATCC 204508 / S288c) (Baker's yeast).